The sequence spans 258 residues: Thiamine thiazole synthase (258 aa).

Residues serine 36, 55-56, glycine 63, isoleucine 127, and 153-155 each bind NAD(+); these read ER and HVD. Fe cation-binding residues include aspartate 155 and histidine 170. Methionine 224 lines the NAD(+) pocket. Position 234 (arginine 234) interacts with glycine.

Belongs to the THI4 family. In terms of assembly, homooctamer; tetramer of dimers. Fe(2+) serves as cofactor.

The catalysed reaction is hydrogen sulfide + glycine + NAD(+) = ADP-5-ethyl-4-methylthiazole-2-carboxylate + nicotinamide + 3 H2O + H(+). It functions in the pathway cofactor biosynthesis; thiamine diphosphate biosynthesis. Functionally, involved in the biosynthesis of the thiazole moiety of thiamine. Catalyzes the conversion of NAD and glycine to adenosine diphosphate 5-(2-hydroxyethyl)-4-methylthiazole-2-carboxylate (ADT), an adenylated thiazole intermediate, using free sulfide as a source of sulfur. This Methanothermobacter thermautotrophicus (strain ATCC 29096 / DSM 1053 / JCM 10044 / NBRC 100330 / Delta H) (Methanobacterium thermoautotrophicum) protein is Thiamine thiazole synthase.